A 137-amino-acid polypeptide reads, in one-letter code: Large ribosomal subunit protein uL16 (137 aa).

This sequence belongs to the universal ribosomal protein uL16 family. In terms of assembly, part of the 50S ribosomal subunit.

In terms of biological role, binds 23S rRNA and is also seen to make contacts with the A and possibly P site tRNAs. The chain is Large ribosomal subunit protein uL16 from Dinoroseobacter shibae (strain DSM 16493 / NCIMB 14021 / DFL 12).